The following is a 218-amino-acid chain: Thiopurine S-methyltransferase (218 aa).

S-adenosyl-L-methionine contacts are provided by W10, L45, E66, and R123.

Belongs to the class I-like SAM-binding methyltransferase superfamily. TPMT family.

It is found in the cytoplasm. The enzyme catalyses S-adenosyl-L-methionine + a thiopurine = S-adenosyl-L-homocysteine + a thiopurine S-methylether.. This is Thiopurine S-methyltransferase from Pseudomonas paraeruginosa (strain DSM 24068 / PA7) (Pseudomonas aeruginosa (strain PA7)).